Consider the following 631-residue polypeptide: BTB/POZ domain-containing protein At1g67900 (631 aa).

One can recognise a BTB domain in the interval 28–93 (SDFTIEVSGS…CYGITITISA (66 aa)). Positions 200 to 509 (GWWAEDIAEL…VQVLFYEQAR (310 aa)) constitute an NPH3 domain. A disordered region spans residues 361–399 (QTSPPTSPLRGKKGMMDRRRRSRSAENIDLEFQESRRSS). Over residues 370–382 (RGKKGMMDRRRRS) the composition is skewed to basic residues. A Phosphotyrosine modification is found at Y450. S567 is subject to Phosphoserine.

The protein belongs to the NPH3 family.

The protein operates within protein modification; protein ubiquitination. Its function is as follows. May act as a substrate-specific adapter of an E3 ubiquitin-protein ligase complex (CUL3-RBX1-BTB) which mediates the ubiquitination and subsequent proteasomal degradation of target proteins. In Arabidopsis thaliana (Mouse-ear cress), this protein is BTB/POZ domain-containing protein At1g67900.